Here is a 138-residue protein sequence, read N- to C-terminus: Large ribosomal subunit protein uL16 (138 aa).

The span at Met-1–Gly-15 shows a compositional bias: basic residues. The interval Met-1–Ala-21 is disordered.

The protein belongs to the universal ribosomal protein uL16 family. Part of the 50S ribosomal subunit.

Its function is as follows. Binds 23S rRNA and is also seen to make contacts with the A and possibly P site tRNAs. In Borreliella afzelii (strain PKo) (Borrelia afzelii), this protein is Large ribosomal subunit protein uL16.